Reading from the N-terminus, the 269-residue chain is Formamidopyrimidine-DNA glycosylase (269 aa).

The Schiff-base intermediate with DNA role is filled by proline 2. The active-site Proton donor is glutamate 3. Lysine 57 functions as the Proton donor; for beta-elimination activity in the catalytic mechanism. The DNA site is built by histidine 90, arginine 109, and lysine 150. The FPG-type zinc finger occupies 235 to 269 (QVYGKGGLPCPKCGTELAEVKIGQRATVYCSQCQQ). Catalysis depends on arginine 259, which acts as the Proton donor; for delta-elimination activity.

It belongs to the FPG family. As to quaternary structure, monomer. Requires Zn(2+) as cofactor.

The catalysed reaction is Hydrolysis of DNA containing ring-opened 7-methylguanine residues, releasing 2,6-diamino-4-hydroxy-5-(N-methyl)formamidopyrimidine.. It catalyses the reaction 2'-deoxyribonucleotide-(2'-deoxyribose 5'-phosphate)-2'-deoxyribonucleotide-DNA = a 3'-end 2'-deoxyribonucleotide-(2,3-dehydro-2,3-deoxyribose 5'-phosphate)-DNA + a 5'-end 5'-phospho-2'-deoxyribonucleoside-DNA + H(+). Functionally, involved in base excision repair of DNA damaged by oxidation or by mutagenic agents. Acts as a DNA glycosylase that recognizes and removes damaged bases. Has a preference for oxidized purines, such as 7,8-dihydro-8-oxoguanine (8-oxoG). Has AP (apurinic/apyrimidinic) lyase activity and introduces nicks in the DNA strand. Cleaves the DNA backbone by beta-delta elimination to generate a single-strand break at the site of the removed base with both 3'- and 5'-phosphates. The polypeptide is Formamidopyrimidine-DNA glycosylase (Photobacterium damsela subsp. piscicida (Pasteurella piscicida)).